Consider the following 640-residue polypeptide: ETV5-related protein Ets96B (640 aa).

The segment at 315–375 (HADSTTTAAQ…HHGHQQAEQQ (61 aa)) is disordered. Residues 321–356 (TAAQQQQQQQEQQQQQQQQQQQQQHQQQLQQAAALH) are a coiled coil. Positions 322-355 (AAQQQQQQQEQQQQQQQQQQQQQHQQQLQQAAAL) are enriched in low complexity. The span at 356-369 (HPHHHHSHHGHHGH) shows a compositional bias: basic residues. The segment at residues 498-579 (LQLWQFLVAL…NGERYVYRFV (82 aa)) is a DNA-binding region (ETS). Residues 609–624 (LAKTPPTSGDSQTQSP) show a composition bias toward polar residues. Residues 609-628 (LAKTPPTSGDSQTQSPRVAK) form a disordered region.

Belongs to the ETS family. As to expression, in the adult brain, expressed almost exclusively in dopaminergic neurons.

Its subcellular location is the nucleus. In terms of biological role, required in dopaminergic neurons to regulate expression of genes involved in dopamine signaling. Decreases expression of the dopamine transporter DAT and increases expression of the dopamine transporter Vmat and the tyrosine 3-monooxygenase ple which is involved in dopamine biosynthesis. Also involved in negatively regulating the expression of a group of endoplasmic reticulum proteins, the molecular chaperone Calr and the protein disulfide isomerases CaBP1 and ERp60. The chain is ETV5-related protein Ets96B from Drosophila melanogaster (Fruit fly).